A 388-amino-acid polypeptide reads, in one-letter code: Succinate--CoA ligase [ADP-forming] subunit beta (388 aa).

In terms of domain architecture, ATP-grasp spans 9–244; sequence KALFAEYGLP…PSQDDAREAH (236 aa). Residues K46, 53 to 55, E99, T102, and E107 contribute to the ATP site; that span reads GRG. N199 and D213 together coordinate Mg(2+). Residues N264 and 321–323 contribute to the substrate site; that span reads GIV.

It belongs to the succinate/malate CoA ligase beta subunit family. Heterotetramer of two alpha and two beta subunits. It depends on Mg(2+) as a cofactor.

It carries out the reaction succinate + ATP + CoA = succinyl-CoA + ADP + phosphate. It catalyses the reaction GTP + succinate + CoA = succinyl-CoA + GDP + phosphate. It functions in the pathway carbohydrate metabolism; tricarboxylic acid cycle; succinate from succinyl-CoA (ligase route): step 1/1. Its function is as follows. Succinyl-CoA synthetase functions in the citric acid cycle (TCA), coupling the hydrolysis of succinyl-CoA to the synthesis of either ATP or GTP and thus represents the only step of substrate-level phosphorylation in the TCA. The beta subunit provides nucleotide specificity of the enzyme and binds the substrate succinate, while the binding sites for coenzyme A and phosphate are found in the alpha subunit. The protein is Succinate--CoA ligase [ADP-forming] subunit beta of Shewanella amazonensis (strain ATCC BAA-1098 / SB2B).